The following is a 343-amino-acid chain: Ubiquitin carboxyl-terminal hydrolase isozyme L5 (343 aa).

The 213-residue stretch at 6–218 folds into the UCH catalytic domain; it reads GWCTIESDPG…IRFNLMAVIK (213 aa). Catalysis depends on C83, which acts as the Nucleophile. The active-site Proton donor is the H157. Residues 242 to 266 are disordered; that stretch reads LSELNSGSGGDNKEESGGATPTTKE. Residues 306–334 form the ULD domain; it reads NFTPLILNLIKGLAEKDNLQPLIQKAKDQ.

The protein belongs to the peptidase C12 family. In terms of assembly, component of the 19S (PA700) regulatory complex of the 26S proteasome.

The protein resides in the cytoplasm. Its subcellular location is the nucleus. It catalyses the reaction Thiol-dependent hydrolysis of ester, thioester, amide, peptide and isopeptide bonds formed by the C-terminal Gly of ubiquitin (a 76-residue protein attached to proteins as an intracellular targeting signal).. Protease that specifically cleaves 'Lys-48'-linked polyubiquitin chains. Deubiquitinating enzyme associated with the 19S regulatory subunit of the 26S proteasome. This chain is Ubiquitin carboxyl-terminal hydrolase isozyme L5 (uch2), found in Dictyostelium discoideum (Social amoeba).